The chain runs to 57 residues: Phospholipase A2 superbin b (57 aa).

The Ca(2+) site is built by Y28, G30, and G32. A disulfide bridge links C29 with C45. Residue H48 is part of the active site. Residue D49 coordinates Ca(2+).

Ca(2+) is required as a cofactor. Expressed by the venom gland.

The protein resides in the secreted. It carries out the reaction a 1,2-diacyl-sn-glycero-3-phosphocholine + H2O = a 1-acyl-sn-glycero-3-phosphocholine + a fatty acid + H(+). Its function is as follows. Snake venom phospholipase A2 (PLA2) that inhibits collagen-induced platelet aggregation. In terms of inhibition of platelet aggregation, superbin b is more potent as superbin c, and d. PLA2 catalyzes the calcium-dependent hydrolysis of the 2-acyl groups in 3-sn-phosphoglycerides. This Austrelaps superbus (Lowland copperhead snake) protein is Phospholipase A2 superbin b.